We begin with the raw amino-acid sequence, 194 residues long: Outer-membrane lipoprotein LolB (194 aa).

An N-terminal signal peptide occupies residues 1–18 (MTLFLRIFTFGCLLLLAG). The N-palmitoyl cysteine moiety is linked to residue Cys-19. A lipid anchor (S-diacylglycerol cysteine) is attached at Cys-19.

Belongs to the LolB family. In terms of assembly, monomer.

It is found in the cell outer membrane. Its function is as follows. Plays a critical role in the incorporation of lipoproteins in the outer membrane after they are released by the LolA protein. This Aeromonas salmonicida (strain A449) protein is Outer-membrane lipoprotein LolB.